A 196-amino-acid polypeptide reads, in one-letter code: Autophagy-related protein 31 (196 aa).

A disordered region spans residues 20–45 (IKNNKGPSNDDQPAYNNESKSTDGSD). Polar residues predominate over residues 22–43 (NNKGPSNDDQPAYNNESKSTDG). Phosphoserine occurs at positions 38 and 40. Thr-41 carries the post-translational modification Phosphothreonine. Phosphoserine is present on residues Ser-44 and Ser-116. Residues 120–129 (EENQMRTLSS) are compositionally biased toward polar residues. Positions 120–145 (EENQMRTLSSHGDDKSNDEEEELSVD) are disordered. A phosphoserine mark is found at Ser-135, Ser-143, Ser-146, Ser-153, Ser-174, and Ser-195. A compositionally biased stretch (acidic residues) spans 135–144 (SNDEEEELSV).

As to quaternary structure, forms a stable complex with ATG17 and ATG29. Interacts directly with ATG29. The ATG17-ATG29-ATG31 complex interacts with the ATG1-ATG13 complex. Note=The interaction with the ATG1-ATG13 complex is induced by starvation. Post-translationally, highly phosphorylated. Ser-174 is phosphorylated constitutively. Phosphorylation at Ser-174 is required for autophagy induced by various autophagy stimuli such as nitrogen starvation and rapamycin treatment.

Its subcellular location is the cytoplasm. It localises to the cytoskeleton. It is found in the preautophagosomal structure. In terms of biological role, plays a role in starvation-induced autophagy. Involved in mitophagy. Functions with ATG17 and ATG29 at the preautophagosomal structure (PAS) in order to form normal autophagosomes under starvation conditions. May be involved in microtubule function, such as chromosome segregation and karyogamy. The chain is Autophagy-related protein 31 (ATG31) from Saccharomyces cerevisiae (strain ATCC 204508 / S288c) (Baker's yeast).